Here is a 371-residue protein sequence, read N- to C-terminus: Leu/Ile/Val-binding protein homolog 2 (371 aa).

The signal sequence occupies residues 1-23 (MKKSLFCGVCLCALVAMGGTSFA).

The protein belongs to the leucine-binding protein family.

Component of an amino-acid transport system. The chain is Leu/Ile/Val-binding protein homolog 2 from Brucella abortus (strain 2308).